We begin with the raw amino-acid sequence, 82 residues long: Myosin light chain alkali (82 aa).

In terms of domain architecture, EF-hand spans 7 to 42 (GCYEDFIECLKLYDKEENGTMLLAELQHALLALGEN).

Myosin is a hexamer of 2 heavy chains and 4 light chains.

The polypeptide is Myosin light chain alkali (Mlc1) (Drosophila teissieri (Fruit fly)).